The primary structure comprises 410 residues: MDLIEEAIKLESDLIRINSVNPSFGGKGEKEKAEYVKKKLMEYVESYNIENYTLKEYNIIDKYGIERPNIVFKIDFGRDKTLHIISHLDTVPEGDISLWGTNPYEPVIKDGKIYGRGSEDNHKGIVSSLLLLKMIFENNIEPKYNLSLIFVSDEEDGSEYGLKYLLNNFEDEIFKKDDLIIVPDFGTPTGEFVEIGEKGILWIKFNIKGKQCHGSTPENGLNADIVAFNFANELYNGLYEKFDEINSIFLPEYSTFEPTILKNKVENPNTIPGYVEVVFDCRILPTYKIEEVLEFINKFIKNFEFKKYIKHYDNSIKAEITYEILKSENPNYTDENAEIIKELKKAIKNVLNRDAKLCGMGGGTVAAFLRYKGYNVAVWGIGEETAHQPNEHIKIEDLVKMAEVFYEILK.

Residue His-87 coordinates Zn(2+). Asp-89 is an active-site residue. Asp-120 is a binding site for Zn(2+). Glu-154 serves as the catalytic Proton acceptor. 3 residues coordinate Zn(2+): Glu-155, Asp-184, and His-387.

This sequence belongs to the peptidase M20A family. The cofactor is Zn(2+). Co(2+) serves as cofactor.

This is an uncharacterized protein from Methanocaldococcus jannaschii (strain ATCC 43067 / DSM 2661 / JAL-1 / JCM 10045 / NBRC 100440) (Methanococcus jannaschii).